Here is a 298-residue protein sequence, read N- to C-terminus: Deleted in azoospermia-like (298 aa).

Residues 1–27 (MSATTSEAPNSAVSREASTQSSSATTS) form a disordered region. Over residues 11-27 (SAVSREASTQSSSATTS) the composition is skewed to low complexity. Residues 40 to 115 (NTVFVGGIDV…KKLKLGPAIR (76 aa)) form the RRM domain. The segment at 80–132 (KGYGFVSFYNDVDVQKIVESQINFHGKKLKLGPAIRKQNLCTYHVQPRPLIFN) is homodimerization. The DAZ domain maps to 167–190 (AYPPYPSSPVQVITGYQLPVYNYQ). At Tyr276 the chain carries Phosphotyrosine.

The protein belongs to the RRM DAZ family. Homodimer and heterodimer. Forms a heterodimer with DAZ. Interacts with BOLL, DAZAP1 and DAZAP2. Interacts with PUM2. Multiple DAZL RRMs can bind to a single RNA containing multiple GUU triplets. Expressed predominantly in testis with lower levels in ovary. In testis, it is expressed in pachytene spermatocytes and at lower level in type-B spermatogonia, preleptotene and zygotene spermatocytes. In ovary, it is expressed in maturing follicles. In embryonic and prepuberal ovary, it is expressed in the oocyte and follicular cells.

The protein resides in the cytoplasm. Its function is as follows. RNA-binding protein, which is essential for gametogenesis in both males and females. Plays a central role during spermatogenesis. Acts by binding to the 3'-UTR of mRNA, specifically recognizing GUU triplets, and thereby regulating the translation of key transcripts. This chain is Deleted in azoospermia-like (Dazl), found in Mus musculus (Mouse).